The sequence spans 164 residues: Crossover junction endodeoxyribonuclease RuvC (164 aa).

Residues Asp7, Glu67, and Asp140 contribute to the active site. Mg(2+) is bound by residues Asp7, Glu67, and Asp140.

The protein belongs to the RuvC family. In terms of assembly, homodimer which binds Holliday junction (HJ) DNA. The HJ becomes 2-fold symmetrical on binding to RuvC with unstacked arms; it has a different conformation from HJ DNA in complex with RuvA. In the full resolvosome a probable DNA-RuvA(4)-RuvB(12)-RuvC(2) complex forms which resolves the HJ. Mg(2+) serves as cofactor.

Its subcellular location is the cytoplasm. It carries out the reaction Endonucleolytic cleavage at a junction such as a reciprocal single-stranded crossover between two homologous DNA duplexes (Holliday junction).. Its function is as follows. The RuvA-RuvB-RuvC complex processes Holliday junction (HJ) DNA during genetic recombination and DNA repair. Endonuclease that resolves HJ intermediates. Cleaves cruciform DNA by making single-stranded nicks across the HJ at symmetrical positions within the homologous arms, yielding a 5'-phosphate and a 3'-hydroxyl group; requires a central core of homology in the junction. The consensus cleavage sequence is 5'-(A/T)TT(C/G)-3'. Cleavage occurs on the 3'-side of the TT dinucleotide at the point of strand exchange. HJ branch migration catalyzed by RuvA-RuvB allows RuvC to scan DNA until it finds its consensus sequence, where it cleaves and resolves the cruciform DNA. This Pelotomaculum thermopropionicum (strain DSM 13744 / JCM 10971 / SI) protein is Crossover junction endodeoxyribonuclease RuvC.